Here is a 299-residue protein sequence, read N- to C-terminus: MEVTPIPGAPLGAVVHGARVTGDMDKTHLEEIWSALDTYLVLVLRGHETPSYEEFLAFGRRFGHIPKTGLTSGAHPEHNEILIVSNLVEDGRKIGVGDAEWMGWHTDYSFRPRVSQVGFLEAVEVPYSGGGETLFTDMYALYESLSPEERRRLHSFRVRHALRTGYEETIEEELQREVTLGEGADRIQPEDGTSTVHPLIARNPRTGRRSVYISTLNTERIVDLAPDDSRELLDGLLAHAGKPQYTYAHTWQPGDLVVWDQLGTVHAKQAFDPAERRVMRQVVSIFDDPAGPWRAEAAA.

Residues His105 and Asp107 each contribute to the Fe cation site. Residues Thr133 and Trp251 each contribute to the 2-oxoglutarate site. His266 lines the Fe cation pocket. Residue Arg277 participates in 2-oxoglutarate binding.

This sequence belongs to the TfdA dioxygenase family. Fe(2+) is required as a cofactor.

The catalysed reaction is pentalenolactone D + 2 2-oxoglutarate + 2 O2 = pentalenolactone F + 2 succinate + 2 CO2 + H2O. It participates in antibiotic biosynthesis; pentalenolactone biosynthesis. Activated by ascorbate. In terms of biological role, catalyzes the Fe(2+) and alpha-ketoglutarate-dependent oxidation of pentalenolactone D to pentalenolactone F in the biosynthesis of pentalenolactone antibiotic. Also able to catalyze the oxidation of pentalenolactone D to pentalenolactone E. The polypeptide is Pentalenolactone F synthase (pntD) (Streptomyces arenae).